We begin with the raw amino-acid sequence, 193 residues long: Dual-action ribosomal maturation protein DarP (193 aa).

A compositionally biased stretch (basic and acidic residues) spans 1 to 10 (MRGRDEDTGE). Disordered regions lie at residues 1–20 (MRGR…SQQR) and 171–193 (QEQG…EDDE). Positions 181–193 (GLEDGESALEDDE) are enriched in acidic residues.

This sequence belongs to the DarP family.

Its subcellular location is the cytoplasm. Member of a network of 50S ribosomal subunit biogenesis factors which assembles along the 30S-50S interface, preventing incorrect 23S rRNA structures from forming. Promotes peptidyl transferase center (PTC) maturation. The sequence is that of Dual-action ribosomal maturation protein DarP from Xanthomonas oryzae pv. oryzae (strain MAFF 311018).